Reading from the N-terminus, the 180-residue chain is MTLKDIVVGFGTQLRSIWMIGLHAFSKRETRMYPEEPVYLPPRYRGRIVLTRDPDGQERCVACNLCAVACPVGCISLQKAETVDGRWYPEFFRINFSRCIFCGMCEEACPTTAIQLTPDFELGEFKRQDLVYEKEDLLISGPGKYPEYNFYRMAGMAIDGKDKGDAENEAKPIDVKGLLP.

4Fe-4S ferredoxin-type domains follow at residues 48 to 80 (IVLT…LQKA) and 90 to 119 (EFFR…LTPD). [4Fe-4S] cluster contacts are provided by cysteine 60, cysteine 63, cysteine 66, cysteine 70, cysteine 99, cysteine 102, cysteine 105, and cysteine 109.

This sequence belongs to the complex I 23 kDa subunit family. As to quaternary structure, NDH-1 is composed of 13 different subunits. Subunits NuoA, H, J, K, L, M, N constitute the membrane sector of the complex. [4Fe-4S] cluster is required as a cofactor.

The protein resides in the cell inner membrane. The enzyme catalyses a quinone + NADH + 5 H(+)(in) = a quinol + NAD(+) + 4 H(+)(out). Its function is as follows. NDH-1 shuttles electrons from NADH, via FMN and iron-sulfur (Fe-S) centers, to quinones in the respiratory chain. The immediate electron acceptor for the enzyme in this species is believed to be ubiquinone. Couples the redox reaction to proton translocation (for every two electrons transferred, four hydrogen ions are translocated across the cytoplasmic membrane), and thus conserves the redox energy in a proton gradient. This chain is NADH-quinone oxidoreductase subunit I, found in Cronobacter sakazakii (strain ATCC BAA-894) (Enterobacter sakazakii).